The following is a 144-amino-acid chain: Actin-associated protein FAM107A (144 aa).

The stretch at 67 to 94 forms a coiled coil; that stretch reads LQRVLEHRRRNQLIKKKKEELEAKRLQC. A Nuclear localization signal motif is present at residues 74–84; it reads RRRNQLIKKKK. The segment at 105-124 is disordered; sequence QRLNQLEKPPEKEEDHAPEF. The span at 112-124 shows a compositional bias: basic and acidic residues; sequence KPPEKEEDHAPEF.

It belongs to the FAM107 family. As to quaternary structure, interacts with ACTB. Interacts with COMMD1; this interaction stabilizes COMMD1 in the nucleus. Interacts with MAP1A. Interacts with PRDX1. Interacts with F-actin.

The protein localises to the nucleus. The protein resides in the cytoplasm. It localises to the cytoskeleton. It is found in the stress fiber. Its subcellular location is the cell junction. The protein localises to the focal adhesion. The protein resides in the cell projection. It localises to the ruffle membrane. It is found in the synapse. Functionally, stress-inducible actin-binding protein that plays a role in synaptic and cognitive functions by modulating actin filamentous (F-actin) dynamics. Mediates polymerization of globular actin to F-actin. Also binds to, stabilizes and bundles F-actin. Involved in synaptic function by regulating neurite outgrowth in an actin-dependent manner and for the acquisition of hippocampus-dependent cognitive function, such as learning and long-term memory. Plays a role in the actin and microtubule cytoskeleton organization; negatively regulates focal adhesion (FA) assembly promoting malignant glial cell migration in an actin-, microtubule- and MAP1A-dependent manner. Also involved in neuroblastoma G1/S phase cell cycle progression and cell proliferation inhibition by stimulating ubiquitination of NF-kappa-B subunit RELA and NF-kappa-B degradation in a COMMD1- and actin-dependent manner. May play a role in tumor development. The protein is Actin-associated protein FAM107A (FAM107A) of Pan troglodytes (Chimpanzee).